A 549-amino-acid chain; its full sequence is Glucose-6-phosphate isomerase (549 aa).

Glu-355 (proton donor) is an active-site residue. Catalysis depends on residues His-386 and Lys-514.

Belongs to the GPI family.

It is found in the cytoplasm. It carries out the reaction alpha-D-glucose 6-phosphate = beta-D-fructose 6-phosphate. The protein operates within carbohydrate biosynthesis; gluconeogenesis. It functions in the pathway carbohydrate degradation; glycolysis; D-glyceraldehyde 3-phosphate and glycerone phosphate from D-glucose: step 2/4. In terms of biological role, catalyzes the reversible isomerization of glucose-6-phosphate to fructose-6-phosphate. This Enterobacter sp. (strain 638) protein is Glucose-6-phosphate isomerase.